The chain runs to 104 residues: PLAT domain-containing protein 3 (104 aa).

The PLAT domain maps to 1 to 104 (MSLRLYDSYG…LARDASPYEL (104 aa)).

This Arabidopsis thaliana (Mouse-ear cress) protein is PLAT domain-containing protein 3.